The primary structure comprises 244 residues: ATP synthase subunit a (244 aa).

6 helical membrane-spanning segments follow: residues 25 to 45 (ISFT…LLIF), 85 to 105 (YFAF…FGMI), 115 to 135 (IIVT…IGFM), 144 to 164 (LFVP…IEII), 193 to 213 (GFVI…SVAL), and 216 to 236 (LEIL…CIYL).

It belongs to the ATPase A chain family. F-type ATPases have 2 components, CF(1) - the catalytic core - and CF(0) - the membrane proton channel. CF(1) has five subunits: alpha(3), beta(3), gamma(1), delta(1), epsilon(1). CF(0) has three main subunits: a(1), b(2) and c(9-12). The alpha and beta chains form an alternating ring which encloses part of the gamma chain. CF(1) is attached to CF(0) by a central stalk formed by the gamma and epsilon chains, while a peripheral stalk is formed by the delta and b chains.

The protein localises to the cell inner membrane. Functionally, key component of the proton channel; it plays a direct role in the translocation of protons across the membrane. The protein is ATP synthase subunit a of Pelagibacter ubique (strain HTCC1062).